The sequence spans 131 residues: Small ribosomal subunit protein bS6 (131 aa).

This sequence belongs to the bacterial ribosomal protein bS6 family.

Functionally, binds together with bS18 to 16S ribosomal RNA. The polypeptide is Small ribosomal subunit protein bS6 (Borrelia hermsii (strain HS1 / DAH)).